We begin with the raw amino-acid sequence, 364 residues long: tRNA-specific 2-thiouridylase MnmA 1 (364 aa).

ATP is bound by residues 11–18 (GMSGGTDS) and F37. C96 functions as the Nucleophile in the catalytic mechanism. A disulfide bridge links C96 with C193. G120 provides a ligand contact to ATP. Positions 142–144 (KDQ) are interaction with tRNA. The active-site Cysteine persulfide intermediate is C193. Residues 309–310 (RY) form an interaction with tRNA region.

It belongs to the MnmA/TRMU family.

It is found in the cytoplasm. The enzyme catalyses S-sulfanyl-L-cysteinyl-[protein] + uridine(34) in tRNA + AH2 + ATP = 2-thiouridine(34) in tRNA + L-cysteinyl-[protein] + A + AMP + diphosphate + H(+). In terms of biological role, catalyzes the 2-thiolation of uridine at the wobble position (U34) of tRNA, leading to the formation of s(2)U34. The polypeptide is tRNA-specific 2-thiouridylase MnmA 1 (Bacteroides fragilis (strain ATCC 25285 / DSM 2151 / CCUG 4856 / JCM 11019 / LMG 10263 / NCTC 9343 / Onslow / VPI 2553 / EN-2)).